The following is a 327-amino-acid chain: Glycerol-3-phosphate dehydrogenase [NAD(P)+] (327 aa).

Phenylalanine 13, arginine 34, and lysine 107 together coordinate NADPH. Lysine 107 and glycine 135 together coordinate sn-glycerol 3-phosphate. Position 139 (alanine 139) interacts with NADPH. Lysine 190, aspartate 243, serine 253, arginine 254, and asparagine 255 together coordinate sn-glycerol 3-phosphate. Lysine 190 (proton acceptor) is an active-site residue. Arginine 254 serves as a coordination point for NADPH. Positions 276 and 277 each coordinate NADPH.

The protein belongs to the NAD-dependent glycerol-3-phosphate dehydrogenase family.

It is found in the cytoplasm. The catalysed reaction is sn-glycerol 3-phosphate + NAD(+) = dihydroxyacetone phosphate + NADH + H(+). It carries out the reaction sn-glycerol 3-phosphate + NADP(+) = dihydroxyacetone phosphate + NADPH + H(+). Its pathway is membrane lipid metabolism; glycerophospholipid metabolism. Catalyzes the reduction of the glycolytic intermediate dihydroxyacetone phosphate (DHAP) to sn-glycerol 3-phosphate (G3P), the key precursor for phospholipid synthesis. This is Glycerol-3-phosphate dehydrogenase [NAD(P)+] from Rhizobium etli (strain ATCC 51251 / DSM 11541 / JCM 21823 / NBRC 15573 / CFN 42).